The following is a 262-amino-acid chain: Zinc finger protein ehn-3 (262 aa).

4 consecutive C2H2-type zinc fingers follow at residues 2 to 24 (EKCDICHQKFSNKTNLNRHKVMH), 30 to 52 (FECQFCRRPFFRNDRMKEHMMTH), 59 to 84 (FECPITACNSKFNSFTSLQFHVDSEH), and 92 to 115 (AKCKSCIKWFNSSHRLLLHFHTAH). Residues 179–204 (SVKSAKELSPTPSTEIETPEEEELDG) are disordered. The segment covering 185 to 194 (ELSPTPSTEI) has biased composition (low complexity). The span at 195 to 204 (ETPEEEELDG) shows a compositional bias: acidic residues. C2H2-type zinc fingers lie at residues 208–230 (WYCDYCKIRFDDKVMWYLHSGLH) and 236–260 (FKCSLCGSLCDGKYDFAAHLVYANH).

The protein belongs to the krueppel C2H2-type zinc-finger protein family.

The protein localises to the nucleus. Functionally, together with the zinc finger protein ztf-16, plays a role in gonadogenesis, specifically in somatic gonad precursor cell development. This is possibly by regulating tra-1 gene expression. Required for proper gonadal primordium assembly and somatic gonad precursor cell morphology. The polypeptide is Zinc finger protein ehn-3 (Caenorhabditis elegans).